Consider the following 146-residue polypeptide: General odorant-binding protein 19a (146 aa).

A signal peptide spans 1–22 (MKFHLLLVCVAISLGPIPQSEA). 3 disulfide bridges follow: C40–C72, C68–C126, and C113–C135.

Belongs to the PBP/GOBP family. As to expression, expressed in adult olfactory system. Expressed exclusively in a subset of chemosensory sensilla on the third antennal segment.

The protein localises to the secreted. Its function is as follows. Present in the aqueous fluid surrounding olfactory sensory dendrites and are thought to aid in the capture and transport of hydrophobic odorants into and through this fluid. In Drosophila melanogaster (Fruit fly), this protein is General odorant-binding protein 19a (Obp19a).